Consider the following 131-residue polypeptide: uncharacterized protein (131 aa).

The signal sequence occupies residues 1–26; sequence MKKIVAAIVVIGLVFIAFFYLYSRSG.

This is an uncharacterized protein from Bacillus subtilis (strain 168).